A 244-amino-acid chain; its full sequence is ATP synthase subunit a, chloroplastic (244 aa).

Transmembrane regions (helical) follow at residues 35-55, 92-112, 131-151, 196-216, and 217-237; these read QVLITSWVVIAILLGSAVIAV, VPFIGTMFLFIFVSNWSGALL, INTTVALALLTSVAYFYAGLS, LVVVVLVSLVPSVVPIPVMFL, and GLFTSGIQALIFATLAAAYIG.

The protein belongs to the ATPase A chain family. In terms of assembly, F-type ATPases have 2 components, CF(1) - the catalytic core - and CF(0) - the membrane proton channel. CF(1) has five subunits: alpha(3), beta(3), gamma(1), delta(1), epsilon(1). CF(0) has four main subunits: a, b, b' and c.

The protein resides in the plastid. It is found in the chloroplast thylakoid membrane. Its function is as follows. Key component of the proton channel; it plays a direct role in the translocation of protons across the membrane. This is ATP synthase subunit a, chloroplastic from Gossypium hirsutum (Upland cotton).